Here is a 122-residue protein sequence, read N- to C-terminus: Large ribosomal subunit protein uL14 (122 aa).

It belongs to the universal ribosomal protein uL14 family. As to quaternary structure, part of the 50S ribosomal subunit. Forms a cluster with proteins L3 and L19. In the 70S ribosome, L14 and L19 interact and together make contacts with the 16S rRNA in bridges B5 and B8.

Binds to 23S rRNA. Forms part of two intersubunit bridges in the 70S ribosome. The sequence is that of Large ribosomal subunit protein uL14 from Shewanella frigidimarina (strain NCIMB 400).